The sequence spans 98 residues: NADH-ubiquinone oxidoreductase chain 4L (98 aa).

The next 3 membrane-spanning stretches (helical) occupy residues methionine 1–methionine 21, serine 29–leucine 49, and isoleucine 61–valine 81.

Belongs to the complex I subunit 4L family. In terms of assembly, core subunit of respiratory chain NADH dehydrogenase (Complex I) which is composed of 45 different subunits.

The protein localises to the mitochondrion inner membrane. It catalyses the reaction a ubiquinone + NADH + 5 H(+)(in) = a ubiquinol + NAD(+) + 4 H(+)(out). In terms of biological role, core subunit of the mitochondrial membrane respiratory chain NADH dehydrogenase (Complex I) which catalyzes electron transfer from NADH through the respiratory chain, using ubiquinone as an electron acceptor. Part of the enzyme membrane arm which is embedded in the lipid bilayer and involved in proton translocation. The protein is NADH-ubiquinone oxidoreductase chain 4L (MT-ND4L) of Felis catus (Cat).